The primary structure comprises 195 residues: Phosphoheptose isomerase (195 aa).

The SIS domain occupies L36–D195. Residue N51–G53 coordinates substrate. Residues H60 and E64 each coordinate Zn(2+). Residues E64, N95–D96, T121–S123, S126, and Q173 contribute to the substrate site. Residues Q173 and H181 each coordinate Zn(2+).

This sequence belongs to the SIS family. GmhA subfamily. It depends on Zn(2+) as a cofactor.

The protein localises to the cytoplasm. It carries out the reaction 2 D-sedoheptulose 7-phosphate = D-glycero-alpha-D-manno-heptose 7-phosphate + D-glycero-beta-D-manno-heptose 7-phosphate. It participates in carbohydrate biosynthesis; D-glycero-D-manno-heptose 7-phosphate biosynthesis; D-glycero-alpha-D-manno-heptose 7-phosphate and D-glycero-beta-D-manno-heptose 7-phosphate from sedoheptulose 7-phosphate: step 1/1. Catalyzes the isomerization of sedoheptulose 7-phosphate in D-glycero-D-manno-heptose 7-phosphate. This is Phosphoheptose isomerase from Leptospira biflexa serovar Patoc (strain Patoc 1 / Ames).